Consider the following 372-residue polypeptide: Glutamate 5-kinase (372 aa).

Position 14 (K14) interacts with ATP. 3 residues coordinate substrate: S54, D141, and N153. 173-174 (TD) lines the ATP pocket. Residues 280 to 358 (RGNVTLDEGA…DEIESLLGYI (79 aa)) enclose the PUA domain.

The protein belongs to the glutamate 5-kinase family.

Its subcellular location is the cytoplasm. The catalysed reaction is L-glutamate + ATP = L-glutamyl 5-phosphate + ADP. The protein operates within amino-acid biosynthesis; L-proline biosynthesis; L-glutamate 5-semialdehyde from L-glutamate: step 1/2. In terms of biological role, catalyzes the transfer of a phosphate group to glutamate to form L-glutamate 5-phosphate. This is Glutamate 5-kinase from Nitrosospira multiformis (strain ATCC 25196 / NCIMB 11849 / C 71).